Here is a 269-residue protein sequence, read N- to C-terminus: Shikimate dehydrogenase (NADP(+)) (269 aa).

Residues 17 to 19 (SKS) and Thr-64 each bind shikimate. Lys-68 acts as the Proton acceptor in catalysis. Position 80 (Glu-80) interacts with NADP(+). Shikimate is bound by residues Asn-89 and Asp-105. Residues 130 to 134 (GAGGA), 154 to 159 (NRTHAK), and Met-213 each bind NADP(+). Tyr-215 is a binding site for shikimate. Gly-237 contacts NADP(+).

Belongs to the shikimate dehydrogenase family. Homodimer.

The catalysed reaction is shikimate + NADP(+) = 3-dehydroshikimate + NADPH + H(+). The protein operates within metabolic intermediate biosynthesis; chorismate biosynthesis; chorismate from D-erythrose 4-phosphate and phosphoenolpyruvate: step 4/7. Its function is as follows. Involved in the biosynthesis of the chorismate, which leads to the biosynthesis of aromatic amino acids. Catalyzes the reversible NADPH linked reduction of 3-dehydroshikimate (DHSA) to yield shikimate (SA). The protein is Shikimate dehydrogenase (NADP(+)) of Neisseria cinerea.